The chain runs to 63 residues: UPF0434 protein GDI0182/Gdia_2252 (63 aa).

Belongs to the UPF0434 family.

This chain is UPF0434 protein GDI0182/Gdia_2252, found in Gluconacetobacter diazotrophicus (strain ATCC 49037 / DSM 5601 / CCUG 37298 / CIP 103539 / LMG 7603 / PAl5).